A 464-amino-acid chain; its full sequence is Glutamate--tRNA ligase (464 aa).

The 'HIGH' region motif lies at Pro9–Gly19. A 'KMSKS' region motif is present at residues Lys242–Arg246. Lys245 lines the ATP pocket.

It belongs to the class-I aminoacyl-tRNA synthetase family. Glutamate--tRNA ligase type 1 subfamily. In terms of assembly, monomer.

It is found in the cytoplasm. The catalysed reaction is tRNA(Glu) + L-glutamate + ATP = L-glutamyl-tRNA(Glu) + AMP + diphosphate. In terms of biological role, catalyzes the attachment of glutamate to tRNA(Glu) in a two-step reaction: glutamate is first activated by ATP to form Glu-AMP and then transferred to the acceptor end of tRNA(Glu). The chain is Glutamate--tRNA ligase from Neisseria gonorrhoeae (strain ATCC 700825 / FA 1090).